Here is a 63-residue protein sequence, read N- to C-terminus: Laccase-C1 (63 aa).

It belongs to the multicopper oxidase family. As to quaternary structure, monomer. It depends on Cu cation as a cofactor. Post-translationally, glycosylated; contains 16% carbohydrates.

It localises to the secreted. The enzyme catalyses 4 hydroquinone + O2 = 4 benzosemiquinone + 2 H2O. Inhibited by sodium azide. Lignin degradation and detoxification of lignin-derived products. Oxidation of a broad range of substrates including mono-, di- and polyphenols, aromatic amines and methoxy-substituted phenols accompanied by reduction of oxygen to water. This is Laccase-C1 from Cerrena unicolor (Canker rot fungus).